The following is a 150-amino-acid chain: D-aminoacyl-tRNA deacylase (150 aa).

The Gly-cisPro motif, important for rejection of L-amino acids signature appears at 138-139 (GP).

It belongs to the DTD family. In terms of assembly, homodimer.

It is found in the cytoplasm. The catalysed reaction is glycyl-tRNA(Ala) + H2O = tRNA(Ala) + glycine + H(+). It catalyses the reaction a D-aminoacyl-tRNA + H2O = a tRNA + a D-alpha-amino acid + H(+). In terms of biological role, an aminoacyl-tRNA editing enzyme that deacylates mischarged D-aminoacyl-tRNAs. Also deacylates mischarged glycyl-tRNA(Ala), protecting cells against glycine mischarging by AlaRS. Acts via tRNA-based rather than protein-based catalysis; rejects L-amino acids rather than detecting D-amino acids in the active site. By recycling D-aminoacyl-tRNA to D-amino acids and free tRNA molecules, this enzyme counteracts the toxicity associated with the formation of D-aminoacyl-tRNA entities in vivo and helps enforce protein L-homochirality. The sequence is that of D-aminoacyl-tRNA deacylase from Bacteroides fragilis (strain YCH46).